The following is a 1212-amino-acid chain: Solute carrier family 12 member 2 (1212 aa).

N-acetylmethionine is present on Met1. At 1–286 (MEPRPTAPSS…AESKGVVKFG (286 aa)) the chain is on the cytoplasmic side. 3 disordered regions span residues 36–81 (GTAV…QSRF), 112–138 (GAKQTPADGEASGESEPAKGSEEAKGR), and 150–193 (SSAE…GGGS). 2 positions are modified to phosphoserine: Ser77 and Ser79. The RFXV motif 1 motif lies at 80–83 (RFQV). The segment covering 127–137 (EPAKGSEEAKG) has biased composition (basic and acidic residues). Residues 138–141 (RFRV) carry the RFXV motif 2 motif. The segment covering 150–160 (SSAEDSLSDAA) has biased composition (low complexity). Phosphothreonine; by OXSR1 and STK39 occurs at positions 203, 207, and 212. Phosphothreonine occurs at positions 217 and 230. At Ser242 the chain carries Phosphoserine. Position 266 is a phosphothreonine (Thr266). A discontinuously helical transmembrane segment spans residues 287–316 (WIKGVLVRCMLNIWGVMLFIRLSWIVGQAG). Residue Leu297 participates in Na(+) binding. K(+)-binding residues include Asn298 and Ile299. A Na(+)-binding site is contributed by Trp300. Residues Gly301, Val302, and Met303 each coordinate chloride. The chain crosses the membrane as a helical span at residues 317–336 (IGLSVLVIMMATVVTTITGL). Topologically, residues 337–367 (STSAIATNGFVRGGGAYYLISRSLGPEFGGA) are cytoplasmic. A helical transmembrane segment spans residues 368–395 (IGLIFAFANAVAVAMYVVGFAETVVELL). Phe372 serves as a coordination point for chloride. Tyr383 provides a ligand contact to K(+). At 396–405 (KEHSILMIDE) the chain is on the extracellular side. The chain crosses the membrane as a helical span at residues 406–429 (INDIRIIGAITVVILLGISVAGME). The Cytoplasmic portion of the chain corresponds to 430-432 (WEA). The chain crosses the membrane as a helical span at residues 433–454 (KAQIVLLVILLLAIGDFVIGTF). Residues 455-486 (IPLESKKPKGFFGYKSEIFNENFGPDFREEET) are Extracellular-facing. Residues 487 to 504 (FFSVFAIFFPAATGILAG) form a discontinuously helical membrane-spanning segment. Pro496, Ala497, and Thr499 together coordinate K(+). Pro496 and Ala497 together coordinate chloride. Chloride contacts are provided by Gly500 and Ile501. Over 505–519 (ANISGDLADPQSAIP) the chain is Cytoplasmic. Residues 520 to 541 (KGTLLAILITTLVYVGIAVSVG) traverse the membrane as a helical segment. The Extracellular portion of the chain corresponds to 542–598 (SCVVRDATGNVNDTIVTELTNCTSAACKLNFDFSSCESSPCSYGLMNNFQVMSMVSG). 2 N-linked (GlcNAc...) asparagine glycosylation sites follow: Asn553 and Asn562. 2 cysteine pairs are disulfide-bonded: Cys563–Cys568 and Cys577–Cys582. A helical membrane pass occupies residues 599 to 623 (FTPLISAGIFSATLSSALASLVSAP). Positions 610, 613, and 614 each coordinate Na(+). Residues 624-651 (KIFQALCKDNIYPAFQMFAKGYGKNNEP) lie on the Cytoplasmic side of the membrane. 2 consecutive transmembrane segments (helical) span residues 652-672 (LRGYILTFLIALGFILIAELN) and 673-691 (VIAPIISNFFLASYALINF). 2 residues coordinate chloride: Phe682 and Tyr686. At 692 to 714 (SVFHASLAKSPGWRPAFKYYNMW) the chain is on the cytoplasmic side. 2 consecutive transmembrane segments (helical) span residues 715-732 (ISLLGAILCCIVMFVINW) and 733-745 (WAALLTYVIVLGL). Topologically, residues 746–1212 (YIYVTYKKPD…NHQSVLTFYS (467 aa)) are cytoplasmic. Residues 761 to 778 (STQALTYLNALQHSIRLS) are scissor helix. Ser940 and Ser944 each carry phosphoserine. Residues 962 to 978 (LDTSKPLSEKPITHKVE) are compositionally biased toward basic and acidic residues. The segment at 962–989 (LDTSKPLSEKPITHKVEEEDGKTATQPL) is disordered. Ser994 carries the phosphoserine modification.

Belongs to the SLC12A transporter family. Homodimer; adopts a domain-swap conformation at the scissor helices connecting the transmembrane domain and C-terminal domain. Phosphorylated at Thr-203, Thr-207 and Thr-212 by OXSR1/OSR1 and STK39/SPAK downstream of WNK kinases (WNK1, WNK2, WNK3 or WNK4), promoting its activity. In terms of tissue distribution, expressed in many tissues.

The protein resides in the basolateral cell membrane. The catalysed reaction is K(+)(out) + 2 chloride(out) + Na(+)(out) = K(+)(in) + 2 chloride(in) + Na(+)(in). With respect to regulation, activated following phosphorylation by OXSR1/OSR1 and STK39/SPAK downstream of WNK kinases (WNK1, WNK2, WNK3 or WNK4). Inhibited by bumetanide. Inhibited by furosemide. In terms of biological role, cation-chloride cotransporter which mediates the electroneutral transport of chloride, potassium and/or sodium ions across the membrane. Plays a vital role in the regulation of ionic balance and cell volume. This chain is Solute carrier family 12 member 2 (SLC12A2), found in Homo sapiens (Human).